A 975-amino-acid chain; its full sequence is Nesprin-3 (975 aa).

At Met1 to Arg925 the chain is on the cytoplasmic side. Spectrin repeat units follow at residues Gln220 to Gly325 and Arg647 to Arg740. The interval Leu778–His798 is disordered. The KASH domain maps to Cys917–Thr975. A helical; Anchor for type IV membrane protein transmembrane segment spans residues Val926–Ala946. Topologically, residues Gly947 to Thr975 are perinuclear space.

The protein belongs to the nesprin family. Core component of LINC complexes which are composed of inner nuclear membrane SUN domain-containing proteins coupled to outer nuclear membrane KASH domain-containing nesprins. SUN and KASH domain-containing proteins seem to bind each other promiscuously; however, differentially expression of LINC complex constituents can give rise to specific assemblies. Interacts with SUN1 and SUN2; probably forming respective LINC complexes. Interacts with PLEC (via actin-binding domain). Interacts with DST. Interacts with SYNE1. Interacts (via KASH domain) with TOR1A (ATP-bound); the interaction is required for SYNE3 nuclear envelope localization. Post-translationally, the disulfid bond with SUN1 or SUN2 is required for stability of the respective LINC complex under tensile forces. As to expression, ubiquitous.

The protein localises to the nucleus outer membrane. The protein resides in the nucleus envelope. It is found in the rough endoplasmic reticulum. Functionally, as a component of the LINC (LInker of Nucleoskeleton and Cytoskeleton) complex involved in the connection between the nuclear lamina and the cytoskeleton. The nucleocytoplasmic interactions established by the LINC complex play an important role in the transmission of mechanical forces across the nuclear envelope and in nuclear movement and positioning. Probable anchoring protein which tethers the nucleus to the cytoskeleton by binding PLEC which can associate with the intermediate filament system. Plays a role in the regulation of aortic epithelial cell morphology, and is required for flow-induced centrosome polarization and directional migration in aortic endothelial cells. The chain is Nesprin-3 (Syne3) from Mus musculus (Mouse).